The sequence spans 382 residues: Pyrimidine monooxygenase RutA (382 aa).

Residues 68 to 69, asparagine 134, glutamate 143, 159 to 160, and serine 209 each bind FMN; these read IK and RY.

Belongs to the NtaA/SnaA/DszA monooxygenase family. RutA subfamily.

It catalyses the reaction uracil + FMNH2 + NADH + O2 = (Z)-3-ureidoacrylate + FMN + NAD(+) + H2O + H(+). It carries out the reaction thymine + FMNH2 + NADH + O2 = (Z)-2-methylureidoacrylate + FMN + NAD(+) + H2O + H(+). Functionally, catalyzes the pyrimidine ring opening between N-3 and C-4 by an unusual flavin hydroperoxide-catalyzed mechanism, adding oxygen atoms in the process to yield ureidoacrylate peracid, that immediately reacts with FMN forming ureidoacrylate and FMN-N(5)-oxide. The FMN-N(5)-oxide reacts spontaneously with NADH to produce FMN. Requires the flavin reductase RutF to regenerate FMN in vivo. In Escherichia coli (strain K12 / MC4100 / BW2952), this protein is Pyrimidine monooxygenase RutA.